We begin with the raw amino-acid sequence, 148 residues long: Transcriptional regulator MraZ (148 aa).

SpoVT-AbrB domains lie at 7-56 (KERH…EPDI) and 85-128 (LDVV…APER).

This sequence belongs to the MraZ family. As to quaternary structure, forms oligomers.

It is found in the cytoplasm. The protein resides in the nucleoid. This is Transcriptional regulator MraZ from Chlorobium phaeobacteroides (strain DSM 266 / SMG 266 / 2430).